The chain runs to 232 residues: Enolase-phosphatase E1 (232 aa).

Belongs to the HAD-like hydrolase superfamily. MasA/MtnC family. As to quaternary structure, monomer. Mg(2+) is required as a cofactor.

The catalysed reaction is 5-methylsulfanyl-2,3-dioxopentyl phosphate + H2O = 1,2-dihydroxy-5-(methylsulfanyl)pent-1-en-3-one + phosphate. Its pathway is amino-acid biosynthesis; L-methionine biosynthesis via salvage pathway; L-methionine from S-methyl-5-thio-alpha-D-ribose 1-phosphate: step 3/6. It participates in amino-acid biosynthesis; L-methionine biosynthesis via salvage pathway; L-methionine from S-methyl-5-thio-alpha-D-ribose 1-phosphate: step 4/6. Bifunctional enzyme that catalyzes the enolization of 2,3-diketo-5-methylthiopentyl-1-phosphate (DK-MTP-1-P) into the intermediate 2-hydroxy-3-keto-5-methylthiopentenyl-1-phosphate (HK-MTPenyl-1-P), which is then dephosphorylated to form the acireductone 1,2-dihydroxy-3-keto-5-methylthiopentene (DHK-MTPene). This is Enolase-phosphatase E1 from Nocardia farcinica (strain IFM 10152).